Here is a 148-residue protein sequence, read N- to C-terminus: Arginine repressor (148 aa).

Belongs to the ArgR family.

Its subcellular location is the cytoplasm. It functions in the pathway amino-acid biosynthesis; L-arginine biosynthesis [regulation]. In terms of biological role, regulates arginine biosynthesis genes. The protein is Arginine repressor of Chlorobium luteolum (strain DSM 273 / BCRC 81028 / 2530) (Pelodictyon luteolum).